Here is a 245-residue protein sequence, read N- to C-terminus: GTP cyclohydrolase 1 type 2 homolog (245 aa).

Positions 63, 64, 100, 213, and 217 each coordinate a divalent metal cation.

It belongs to the GTP cyclohydrolase I type 2/NIF3 family. As to quaternary structure, homohexamer.

In Archaeoglobus fulgidus (strain ATCC 49558 / DSM 4304 / JCM 9628 / NBRC 100126 / VC-16), this protein is GTP cyclohydrolase 1 type 2 homolog.